Here is a 581-residue protein sequence, read N- to C-terminus: 2-succinyl-5-enolpyruvyl-6-hydroxy-3-cyclohexene-1-carboxylate synthase (581 aa).

This sequence belongs to the TPP enzyme family. MenD subfamily. In terms of assembly, homodimer. The cofactor is Mg(2+). Mn(2+) is required as a cofactor. Thiamine diphosphate serves as cofactor.

It catalyses the reaction isochorismate + 2-oxoglutarate + H(+) = 5-enolpyruvoyl-6-hydroxy-2-succinyl-cyclohex-3-ene-1-carboxylate + CO2. Its pathway is quinol/quinone metabolism; 1,4-dihydroxy-2-naphthoate biosynthesis; 1,4-dihydroxy-2-naphthoate from chorismate: step 2/7. The protein operates within quinol/quinone metabolism; menaquinone biosynthesis. Catalyzes the thiamine diphosphate-dependent decarboxylation of 2-oxoglutarate and the subsequent addition of the resulting succinic semialdehyde-thiamine pyrophosphate anion to isochorismate to yield 2-succinyl-5-enolpyruvyl-6-hydroxy-3-cyclohexene-1-carboxylate (SEPHCHC). The chain is 2-succinyl-5-enolpyruvyl-6-hydroxy-3-cyclohexene-1-carboxylate synthase from Chlorobium phaeobacteroides (strain BS1).